The following is a 168-amino-acid chain: ATP synthase subunit b, chloroplastic (168 aa).

A helical membrane pass occupies residues 20 to 37 (LNLAVVLPIVFTLGRDTL).

This sequence belongs to the ATPase B chain family. In terms of assembly, F-type ATPases have 2 components, F(1) - the catalytic core - and F(0) - the membrane proton channel. F(1) has five subunits: alpha(3), beta(3), gamma(1), delta(1), epsilon(1). F(0) has four main subunits: a(1), b(1), b'(1) and c(10-14). The alpha and beta chains form an alternating ring which encloses part of the gamma chain. F(1) is attached to F(0) by a central stalk formed by the gamma and epsilon chains, while a peripheral stalk is formed by the delta, b and b' chains.

It is found in the plastid. The protein resides in the chloroplast thylakoid membrane. F(1)F(0) ATP synthase produces ATP from ADP in the presence of a proton or sodium gradient. F-type ATPases consist of two structural domains, F(1) containing the extramembraneous catalytic core and F(0) containing the membrane proton channel, linked together by a central stalk and a peripheral stalk. During catalysis, ATP synthesis in the catalytic domain of F(1) is coupled via a rotary mechanism of the central stalk subunits to proton translocation. Functionally, component of the F(0) channel, it forms part of the peripheral stalk, linking F(1) to F(0). This Ostreococcus tauri protein is ATP synthase subunit b, chloroplastic.